A 141-amino-acid chain; its full sequence is Large ribosomal subunit protein uL16 (141 aa).

This sequence belongs to the universal ribosomal protein uL16 family. As to quaternary structure, part of the 50S ribosomal subunit.

Functionally, binds 23S rRNA and is also seen to make contacts with the A and possibly P site tRNAs. The polypeptide is Large ribosomal subunit protein uL16 (Thermus thermophilus (strain ATCC BAA-163 / DSM 7039 / HB27)).